A 57-amino-acid polypeptide reads, in one-letter code: Putative antitoxin VapB4 (57 aa).

Functionally, possibly the antitoxin component of a type II toxin-antitoxin (TA) system. Its cognate toxin is VapC4 (Potential). The chain is Putative antitoxin VapB4 (vapB4) from Methanocaldococcus jannaschii (strain ATCC 43067 / DSM 2661 / JAL-1 / JCM 10045 / NBRC 100440) (Methanococcus jannaschii).